Reading from the N-terminus, the 382-residue chain is U11/U12 small nuclear ribonucleoprotein 59 kDa protein (382 aa).

Residues 31–63 (NTKNITDQLKQLQDTLNLAKSMEKELEALKMIK) are a coiled coil. The tract at residues 274–297 (SEENTTLTTSNKTNNDTDKDSNTN) is disordered. Residues 277–287 (NTTLTTSNKTN) show a composition bias toward low complexity.

As to quaternary structure, component of the U11/U12 snRNPs that are part of the U12-type spliceosome.

It is found in the nucleus. The polypeptide is U11/U12 small nuclear ribonucleoprotein 59 kDa protein (SNRNP59) (Arabidopsis thaliana (Mouse-ear cress)).